Here is a 392-residue protein sequence, read N- to C-terminus: Early estrogen-induced gene 1 protein (392 aa).

The C2 NT-type domain occupies 2–145 (AFLMKKKKFK…ILKVTIGMFL (144 aa)). Positions 129–138 (NTRQDNSILK) are required for interaction with TNFRSF11A/RANK. Residues 173–324 (LTCKGGGTSS…RKKDSVESHP (152 aa)) form a disordered region. The segment covering 183 to 194 (GGSSSTNSLTGS) has biased composition (low complexity). Positions 228 to 255 (SRNSSYASQQSKLSGYSTEHSRSSSLSD) are enriched in polar residues. Residues 262 to 273 (TSTSSSASGGLS) show a composition bias toward low complexity. Composition is skewed to basic and acidic residues over residues 281-300 (GMEREHRPSEKPPRPPEKPP) and 307-324 (HLSDRSFRRKKDSVESHP).

It belongs to the EEIG family. As to quaternary structure, part of a complex composed of EEIG1, TNFRSF11A/RANK, PLCG2, GAB2, TEC and BTK; complex formation increases in the presence of TNFSF11/RANKL. Interacts with PRDM1/BLIMP1; following TNFSF11/RANKL stimulation in bone marrow-derived macrophages, the interaction promotes the binding of PRDM1/BLIMP1 to the gene promoter of IRF8. Interacts (via N-terminus) with TNFRSF11A/RANK (via cytoplasmic domain); when in the presence of TNFSF11/RANKL. In terms of tissue distribution, expressed during TNFSF11/RANKL-induced differentiation of bone marrow-derived macrophages to osteoclasts.

The protein localises to the nucleus. The protein resides in the cytoplasm. Its subcellular location is the membrane raft. Key component of TNFSF11/RANKL- and TNF-induced osteoclastogenesis pathways, thereby mediates bone resorption in pathological bone loss conditions. Required for TNFSF11/RANKL-induced osteoclastogenesis via its interaction with TNFRSF11A/RANK, thereby facilitates the downsteam transcription of NFATC1 and activation of PLCG2. Facilitates recruitment of the transcriptional repressor PRDM1/BLIMP1 to the promoter of the anti-osteoclastogenesis gene IRF8, thereby resulting in transcription of osteoclast differentiation factors. May play a role in estrogen action. This is Early estrogen-induced gene 1 protein (Eeig1) from Mus musculus (Mouse).